Reading from the N-terminus, the 346-residue chain is Histidinol-phosphate aminotransferase (346 aa).

Lys209 is modified (N6-(pyridoxal phosphate)lysine).

Belongs to the class-II pyridoxal-phosphate-dependent aminotransferase family. Histidinol-phosphate aminotransferase subfamily. As to quaternary structure, homodimer. Pyridoxal 5'-phosphate serves as cofactor.

The catalysed reaction is L-histidinol phosphate + 2-oxoglutarate = 3-(imidazol-4-yl)-2-oxopropyl phosphate + L-glutamate. It participates in amino-acid biosynthesis; L-histidine biosynthesis; L-histidine from 5-phospho-alpha-D-ribose 1-diphosphate: step 7/9. The protein is Histidinol-phosphate aminotransferase of Vibrio cholerae serotype O1 (strain ATCC 39541 / Classical Ogawa 395 / O395).